Consider the following 770-residue polypeptide: Conserved oligomeric Golgi complex subunit 7 (770 aa).

The protein belongs to the COG7 family. In terms of assembly, component of the conserved oligomeric Golgi complex which is composed of eight different subunits and is required for normal Golgi morphology and localization.

The protein localises to the golgi apparatus membrane. Required for normal Golgi function. This is Conserved oligomeric Golgi complex subunit 7 (COG7) from Bos taurus (Bovine).